The chain runs to 222 residues: Sperm acrosome-associated protein 9 (222 aa).

The tract at residues 164 to 222 (QHVSEPQAHQESTRGAARPAQAIGTQPRATKHKCRQLTKASLKPRGCSKPPWRPPGGKL) is disordered.

Microtubule inner protein component of sperm flagellar doublet microtubules. Interacts with CABP1 and CALR. Interacts with INCA1. Interacts with microtubules.

The protein localises to the cytoplasm. It localises to the cytoplasmic vesicle. It is found in the secretory vesicle. The protein resides in the acrosome. Its subcellular location is the cytoskeleton. The protein localises to the cilium basal body. It localises to the flagellum axoneme. It is found in the cilium axoneme. The protein resides in the nucleus. Microtubule inner protein (MIP) part of the dynein-decorated doublet microtubules (DMTs) of multiciliated respiratory cells and the distal singlet microtubules of monoflagellated spermatozoa. Forms an extensive interaction network cross-linking the lumen of axonemal doublet microtubules. The polypeptide is Sperm acrosome-associated protein 9 (Homo sapiens (Human)).